Consider the following 1412-residue polypeptide: DNA-directed RNA polymerase subunit beta' (1412 aa).

Zn(2+) contacts are provided by C70, C72, C85, and C88. D460, D462, and D464 together coordinate Mg(2+). Residues C819, C893, C900, and C903 each contribute to the Zn(2+) site. A disordered region spans residues 1392–1412 (EEAFEFGTPSTPAEEPQHPAE).

Belongs to the RNA polymerase beta' chain family. The RNAP catalytic core consists of 2 alpha, 1 beta, 1 beta' and 1 omega subunit. When a sigma factor is associated with the core the holoenzyme is formed, which can initiate transcription. Requires Mg(2+) as cofactor. The cofactor is Zn(2+).

It carries out the reaction RNA(n) + a ribonucleoside 5'-triphosphate = RNA(n+1) + diphosphate. Functionally, DNA-dependent RNA polymerase catalyzes the transcription of DNA into RNA using the four ribonucleoside triphosphates as substrates. This is DNA-directed RNA polymerase subunit beta' from Burkholderia thailandensis (strain ATCC 700388 / DSM 13276 / CCUG 48851 / CIP 106301 / E264).